Consider the following 320-residue polypeptide: MHKSANSKTRKQSKGLHPRNIHRNGYDFDALKACHPPLVQYIKCNPVGAATIDFANSAAVKALNTALLQHHYKIESWSIPDGALCPPIPGRIDYIHYIAELLGCPLPSGKINTANTCTNNAVKMLDVGTGANGIYTLLACAVYGWRCVGSDINSESLANVKAVLANNPTLNANISLRLQPNKDAFFSQIIQTDDYFDVSVCNPPFHASQEEASKGTNRKLHNLARSRNKAHTAKQPSLNFGGQHAELWCNGGERLFLKKMIKESQAFAQQVGWFTSLVSKSENVQPALKLIRKLGATEVREIEMMQGNKKTRVIAWRFKP.

The interval 1 to 20 is disordered; the sequence is MHKSANSKTRKQSKGLHPRN.

The protein belongs to the methyltransferase superfamily. METTL16/RlmF family.

It is found in the cytoplasm. The catalysed reaction is adenosine(1618) in 23S rRNA + S-adenosyl-L-methionine = N(6)-methyladenosine(1618) in 23S rRNA + S-adenosyl-L-homocysteine + H(+). Specifically methylates the adenine in position 1618 of 23S rRNA. The polypeptide is Ribosomal RNA large subunit methyltransferase F (Saccharophagus degradans (strain 2-40 / ATCC 43961 / DSM 17024)).